A 257-amino-acid polypeptide reads, in one-letter code: uncharacterized protein (257 aa).

The helical transmembrane segment at 7–27 (IGILEIVVILSILITSVSLAY) threads the bilayer.

The protein resides in the membrane. This is an uncharacterized protein from Methanocaldococcus jannaschii (strain ATCC 43067 / DSM 2661 / JAL-1 / JCM 10045 / NBRC 100440) (Methanococcus jannaschii).